The sequence spans 334 residues: Heat-inducible transcription repressor HrcA (334 aa).

It belongs to the HrcA family.

Its function is as follows. Negative regulator of class I heat shock genes (grpE-dnaK-dnaJ and groELS operons). Prevents heat-shock induction of these operons. The protein is Heat-inducible transcription repressor HrcA of Bordetella bronchiseptica (strain ATCC BAA-588 / NCTC 13252 / RB50) (Alcaligenes bronchisepticus).